Consider the following 606-residue polypeptide: Gastrula zinc finger protein XlCGF66.1 (606 aa).

Disordered regions lie at residues 1-31 (MGMWEEASDTGMKGKKKKKDKNEEEEERGKK) and 240-271 (TLHSKDSCNEGHKHLSHKSDYNKHQNPHKRQK). Basic and acidic residues predominate over residues 242–262 (HSKDSCNEGHKHLSHKSDYNK). C2H2-type zinc fingers lie at residues 273–295 (FSCSKCGKCFSNLTSLHCHQKTH), 300–322 (LLCLKCGKCFATSSKLIIHRQTH), 328–350 (FSCSECRICFSKQSSLARHQITH), 384–407 (DFCSECGKCFATSSQLIAHQQQVH), 413–435 (FSCTKCGKCFSYRSRLVRHQRTH), 441–464 (YSCSECGKCFASSSHLIGHRQQVH), 470–492 (FFCSECGKYFLYQSQLVRHQRTH), 498–521 (YSCSECGKCFATSSQLMAHQQQVH), 527–549 (FSCSECGKYFLYRAHLVRHQRTH), 555–578 (DFCFECGKCFATSLQLIAHQQQVH), and 584–606 (FSCSECGKSFLYRSHLARHHRTH).

The protein belongs to the krueppel C2H2-type zinc-finger protein family.

It is found in the nucleus. In terms of biological role, may be involved in transcriptional regulation. This is Gastrula zinc finger protein XlCGF66.1 from Xenopus laevis (African clawed frog).